The following is a 557-amino-acid chain: Glucose-6-phosphate isomerase (557 aa).

The active-site Proton donor is the glutamate 359. Active-site residues include histidine 390 and lysine 518.

The protein belongs to the GPI family.

It localises to the cytoplasm. The enzyme catalyses alpha-D-glucose 6-phosphate = beta-D-fructose 6-phosphate. It functions in the pathway carbohydrate biosynthesis; gluconeogenesis. Its pathway is carbohydrate degradation; glycolysis; D-glyceraldehyde 3-phosphate and glycerone phosphate from D-glucose: step 2/4. Functionally, catalyzes the reversible isomerization of glucose-6-phosphate to fructose-6-phosphate. The sequence is that of Glucose-6-phosphate isomerase from Hahella chejuensis (strain KCTC 2396).